We begin with the raw amino-acid sequence, 574 residues long: Potassium-transporting ATPase potassium-binding subunit (574 aa).

10 helical membrane-spanning segments follow: residues 7-27, 65-85, 136-156, 175-195, 264-284, 292-312, 390-410, 427-447, 494-514, and 534-554; these read IELGLFIALLAVLNIPLGTHL, IEYAVGLLCFNFVGILVSYLI, FGLAVPNFTSAATGIAAAAAL, LIRIHYYLLLPLSLFIAIILL, FVEMLSIFLIPSALTYYFGLS, WSIWLTMTFCFLILTLSCFIF, GLYGILLFVILSVFLFGLMIG, MAVLALMIQYVLILGLSALAL, LLLGVAMFLGRYFVLIPILAI, and GWLFIFVLGATIFLLAALNFF.

This sequence belongs to the KdpA family. The system is composed of three essential subunits: KdpA, KdpB and KdpC.

The protein resides in the cell inner membrane. Functionally, part of the high-affinity ATP-driven potassium transport (or Kdp) system, which catalyzes the hydrolysis of ATP coupled with the electrogenic transport of potassium into the cytoplasm. This subunit binds the periplasmic potassium ions and delivers the ions to the membrane domain of KdpB through an intramembrane tunnel. The chain is Potassium-transporting ATPase potassium-binding subunit from Methylacidiphilum infernorum (isolate V4) (Methylokorus infernorum (strain V4)).